The following is a 493-amino-acid chain: MSKKYIIALDQGTTSSRAIVFDHSTNMVASCQREFSQMYPKPGWVEHDAMEIWASQSSTLIEALARADIHSEDVAAIGITNQRETTVIWDKATGKPVYNAIVWQCRRSKAICDELKTQGLEDYVKQATGLLLDPYFSGTKIKWILDNVDGVRERAEKGELLFGTIDTWLVWKLTEGQAHVTDPTNASRTMLFNIHTQEWDETLLKALNIPRSILPEVKPSSAVYGHTRIVGEGSHIAIAGMAGDQQAALFGQLCIEEGMAKNTYGTGCFLLMNTGTEAVQSQHGLLTTIAIGANGEVNYALEGSVFMGGATVQWLRDELGLIRDAQDTEYFASKVEDTHGVYLIPAFVGLGAPYWDPDARGALVGLTRGANRNHIIRAALEAIAYQSRDLLDAMAKDSRVELKQIKVDGGAVANDFLMQFQSDITNVEVQRPDLTETTAMGAAFLAGLAVGFWDSTDELKLKAGVERSFTPQITAQKRDSLYQGWQNAVARTR.

Thr13 is a binding site for ADP. ATP is bound by residues Thr13, Thr14, and Ser15. Residue Thr13 coordinates sn-glycerol 3-phosphate. Position 17 (Arg17) interacts with ADP. Positions 83, 84, 135, and 244 each coordinate sn-glycerol 3-phosphate. 5 residues coordinate glycerol: Arg83, Glu84, Tyr135, Asp244, and Gln245. Residues Thr266 and Gly309 each coordinate ADP. 4 residues coordinate ATP: Thr266, Gly309, Gln313, and Gly410. Residues Gly410 and Asn414 each coordinate ADP.

Belongs to the FGGY kinase family.

The catalysed reaction is glycerol + ATP = sn-glycerol 3-phosphate + ADP + H(+). It participates in polyol metabolism; glycerol degradation via glycerol kinase pathway; sn-glycerol 3-phosphate from glycerol: step 1/1. Inhibited by fructose 1,6-bisphosphate (FBP). Its function is as follows. Key enzyme in the regulation of glycerol uptake and metabolism. Catalyzes the phosphorylation of glycerol to yield sn-glycerol 3-phosphate. The sequence is that of Glycerol kinase from Shewanella halifaxensis (strain HAW-EB4).